Reading from the N-terminus, the 519-residue chain is ATP synthase subunit alpha, mitochondrial (519 aa).

ATP is bound at residue Gly-188–Ser-195.

Belongs to the ATPase alpha/beta chains family. In terms of assembly, F-type ATPases have 2 components, CF(1) - the catalytic core - and CF(0) - the membrane proton channel. CF(1) has five subunits: alpha(3), beta(3), gamma(1), delta(1), epsilon(1). CF(0) has three main subunits: a, b and c.

The protein localises to the mitochondrion. Its subcellular location is the mitochondrion inner membrane. In terms of biological role, mitochondrial membrane ATP synthase (F(1)F(0) ATP synthase or Complex V) produces ATP from ADP in the presence of a proton gradient across the membrane which is generated by electron transport complexes of the respiratory chain. F-type ATPases consist of two structural domains, F(1) - containing the extramembraneous catalytic core, and F(0) - containing the membrane proton channel, linked together by a central stalk and a peripheral stalk. During catalysis, ATP synthesis in the catalytic domain of F(1) is coupled via a rotary mechanism of the central stalk subunits to proton translocation. Subunits alpha and beta form the catalytic core in F(1). Rotation of the central stalk against the surrounding alpha(3)beta(3) subunits leads to hydrolysis of ATP in three separate catalytic sites on the beta subunits. Subunit alpha does not bear the catalytic high-affinity ATP-binding sites. The sequence is that of ATP synthase subunit alpha, mitochondrial (atp1) from Dictyostelium citrinum (Slime mold).